Reading from the N-terminus, the 446-residue chain is D(1A) dopamine receptor (446 aa).

Over M1–R23 the chain is Extracellular. An N-linked (GlcNAc...) asparagine glycan is attached at N5. The chain crosses the membrane as a helical span at residues I24–I49. The Cytoplasmic segment spans residues R50–N60. The helical transmembrane segment at F61–A87 threads the bilayer. Over G88–C96 the chain is Extracellular. A disulfide bridge connects residues C96 and C186. The chain crosses the membrane as a helical span at residues N97–V119. Residues D120 to K138 are Cytoplasmic-facing. A helical transmembrane segment spans residues A139 to W163. At H164 to R192 the chain is on the extracellular side. N175 carries N-linked (GlcNAc...) asparagine glycosylation. The chain crosses the membrane as a helical span at residues T193 to Y218. Residues R219 to K272 lie on the Cytoplasmic side of the membrane. The chain crosses the membrane as a helical span at residues T273–G299. Over S300–T312 the chain is Extracellular. Residues F313 to F337 form a helical membrane-spanning segment. The Cytoplasmic portion of the chain corresponds to R338–T446. Residues C347 and C351 are each lipidated (S-palmitoyl cysteine).

Belongs to the G-protein coupled receptor 1 family. In terms of assembly, interacts with DNAJC14 via its C-terminus. Interacts with DRD2. Interacts with DORIP1.

It is found in the cell membrane. Its subcellular location is the endoplasmic reticulum membrane. It localises to the cell projection. The protein localises to the cilium membrane. The protein resides in the dendrite. It is found in the dendritic spine. Functionally, dopamine receptor whose activity is mediated by G proteins which activate adenylyl cyclase. The polypeptide is D(1A) dopamine receptor (DRD1) (Bos taurus (Bovine)).